Reading from the N-terminus, the 198-residue chain is MEAHMDRLSLTGALLVATPLLEDPNFYRSVVFVIDDTPDEGTLGVILNRPSELGVGEVLAEWGEHVSQPAVMFAGGPVGQDAGLALAVPDDGQRPLGWKSLDAMDAKTWPNGLGTVDLDTPPQLVADALRQMRVFAGYAGWSAGQLRAEIDQGAWYVLPATVDDVFCADPRGLWSRVLRRQGGELAFVATFPHDPTLN.

It belongs to the UPF0301 (AlgH) family.

This is UPF0301 protein Tfu_2389 from Thermobifida fusca (strain YX).